The following is a 340-amino-acid chain: L-threonine 3-dehydrogenase (340 aa).

Residue C38 coordinates Zn(2+). Catalysis depends on charge relay system residues T40 and H43. H63, E64, C93, C96, C99, and C107 together coordinate Zn(2+). NAD(+) contacts are provided by residues I175, D195, R200, 261–263, and 285–286; these read LGI and IY.

It belongs to the zinc-containing alcohol dehydrogenase family. Homotetramer. It depends on Zn(2+) as a cofactor.

Its subcellular location is the cytoplasm. The catalysed reaction is L-threonine + NAD(+) = (2S)-2-amino-3-oxobutanoate + NADH + H(+). Its pathway is amino-acid degradation; L-threonine degradation via oxydo-reductase pathway; glycine from L-threonine: step 1/2. Catalyzes the NAD(+)-dependent oxidation of L-threonine to 2-amino-3-ketobutyrate. This is L-threonine 3-dehydrogenase from Xanthomonas axonopodis pv. citri (strain 306).